Reading from the N-terminus, the 946-residue chain is Inositol-trisphosphate 3-kinase B (946 aa).

Disordered stretches follow at residues 19–128 (EMKS…EEAK), 156–288 (AQSS…TRSC), 308–472 (ARVT…GIPS), 486–561 (KDLK…RKAC), and 580–638 (GALE…HTLD). 3 positions are modified to phosphoserine: S43, S49, and S71. Residues 83–105 (NSSSGSGSGSSGSSVSSPSWAGR) show a composition bias toward low complexity. S204 and S269 each carry phosphoserine. A compositionally biased stretch (polar residues) spans 396-411 (TTVSVQSAESSDSLSW). Positions 445–458 (GGSPTLGLLGGSPS) are enriched in low complexity. Residues 524–534 (TGVQSEGTWES) are compositionally biased toward polar residues. Residues 599–612 (SSSSASSTGFSSSY) show a composition bias toward low complexity. ATP-binding positions include S679, K690, 730–732 (DDL), and D743. Positions 745 and 766 each coordinate substrate. The calmodulin-binding stretch occupies residues 768–776 (DMYQKMIEV). 793 to 800 (KPRYMQWR) is a substrate binding site. The ATP site is built by K817 and D897. K900 contributes to the substrate binding site.

Belongs to the inositol phosphokinase (IPK) family. As to quaternary structure, interacts with DMTN.

It is found in the cytoplasm. The protein resides in the cytoskeleton. The protein localises to the endoplasmic reticulum. It catalyses the reaction 1D-myo-inositol 1,4,5-trisphosphate + ATP = 1D-myo-inositol 1,3,4,5-tetrakisphosphate + ADP + H(+). Its activity is regulated as follows. IP3K is activated by calcium and calmodulin. Form B is much more sensitive to calcium/calmodulin than form A. Functionally, catalyzes the phosphorylation of 1D-myo-inositol 1,4,5-trisphosphate (InsP3) into 1D-myo-inositol 1,3,4,5-tetrakisphosphate and participates to the regulation of calcium homeostasis. The protein is Inositol-trisphosphate 3-kinase B of Homo sapiens (Human).